Consider the following 174-residue polypeptide: MLHIFYIYSKSRKFWAILICSSISLISIALLNQFFFLLKPCILCIYQRCSLFGITIAGLIALISPKTTLLRLFSIFIWLYSAIKGLYFSNIHMQTTLHPSSSLTCDLFVSFPNWLPLNKWYPIIFDSKISNCYSYPQYLLYLEISQWMLLFFLIYLIIAIFTIISQCHNLFQKK.

Residues 1–14 are Cytoplasmic-facing; sequence MLHIFYIYSKSRKF. The helical transmembrane segment at 15–31 threads the bilayer; sequence WAILICSSISLISIALL. Over 32-49 the chain is Periplasmic; it reads NQFFFLLKPCILCIYQRC. Cysteine 41 and cysteine 44 are disulfide-bonded. Residues 50-65 form a helical membrane-spanning segment; it reads SLFGITIAGLIALISP. At 66–72 the chain is on the cytoplasmic side; sequence KTTLLRL. Residues 73–90 traverse the membrane as a helical segment; sequence FSIFIWLYSAIKGLYFSN. Over 91–146 the chain is Periplasmic; sequence IHMQTTLHPSSSLTCDLFVSFPNWLPLNKWYPIIFDSKISNCYSYPQYLLYLEISQ. Cysteine 105 and cysteine 132 form a disulfide bridge. The helical transmembrane segment at 147–165 threads the bilayer; it reads WMLLFFLIYLIIAIFTIIS. Over 166–174 the chain is Cytoplasmic; the sequence is QCHNLFQKK.

The protein belongs to the DsbB family.

It is found in the cell inner membrane. In terms of biological role, required for disulfide bond formation in some periplasmic proteins. Acts by oxidizing the DsbA protein. In Blochmanniella floridana, this protein is Disulfide bond formation protein B.